The following is a 394-amino-acid chain: Phosphoglycerate kinase (394 aa).

Substrate is bound by residues 21–23 (DFN), arginine 36, 59–62 (HLGR), arginine 118, and arginine 151. Serine 183 bears the Phosphoserine mark. ATP-binding residues include lysine 201 and glycine 292. Residue threonine 299 is modified to Phosphothreonine. Residues glutamate 323 and 350 to 353 (GGDS) contribute to the ATP site.

This sequence belongs to the phosphoglycerate kinase family. Monomer.

The protein localises to the cytoplasm. The catalysed reaction is (2R)-3-phosphoglycerate + ATP = (2R)-3-phospho-glyceroyl phosphate + ADP. It functions in the pathway carbohydrate degradation; glycolysis; pyruvate from D-glyceraldehyde 3-phosphate: step 2/5. This Bacillus thuringiensis (strain Al Hakam) protein is Phosphoglycerate kinase.